Here is a 447-residue protein sequence, read N- to C-terminus: Sulfoquinovose isomerase (447 aa).

The protein belongs to the SqvD family.

The enzyme catalyses 6-sulfo-beta-D-quinovose = 6-deoxy-6-sulfo-D-fructose. Part of the sulfo-TK pathway, a D-sulfoquinovose degradation pathway that produces 2-hydroxyethane-1-sulfonate (isethionate). Catalyzes the isomerization of sulfoquinovose (SQ) to 6-deoxy-6-sulfo-D-fructose (SF). This is Sulfoquinovose isomerase from Clostridium sp. (strain MSTE9).